A 244-amino-acid chain; its full sequence is Nuclear protein UL4 homolog (244 aa).

The segment at 193-227 (RPDDQTTPTPTPHQYTSQRRQPETNCPSSPQPAFF) is disordered. Residues 205-220 (HQYTSQRRQPETNCPS) are compositionally biased toward polar residues.

The protein belongs to the alphaherpesvirinae HHV-1 UL4 family.

It localises to the host nucleus. The sequence is that of Nuclear protein UL4 homolog from Varicella-zoster virus (strain Dumas) (HHV-3).